The sequence spans 691 residues: Elongation factor G (691 aa).

The 275-residue stretch at Glu-8 to Thr-282 folds into the tr-type G domain. GTP-binding positions include Ala-17–Thr-24, Asp-81–His-85, and Asn-135–Asp-138.

It belongs to the TRAFAC class translation factor GTPase superfamily. Classic translation factor GTPase family. EF-G/EF-2 subfamily.

It is found in the cytoplasm. In terms of biological role, catalyzes the GTP-dependent ribosomal translocation step during translation elongation. During this step, the ribosome changes from the pre-translocational (PRE) to the post-translocational (POST) state as the newly formed A-site-bound peptidyl-tRNA and P-site-bound deacylated tRNA move to the P and E sites, respectively. Catalyzes the coordinated movement of the two tRNA molecules, the mRNA and conformational changes in the ribosome. The sequence is that of Elongation factor G from Natranaerobius thermophilus (strain ATCC BAA-1301 / DSM 18059 / JW/NM-WN-LF).